The chain runs to 138 residues: ATP synthase epsilon chain (138 aa).

Belongs to the ATPase epsilon chain family. In terms of assembly, F-type ATPases have 2 components, CF(1) - the catalytic core - and CF(0) - the membrane proton channel. CF(1) has five subunits: alpha(3), beta(3), gamma(1), delta(1), epsilon(1). CF(0) has three main subunits: a, b and c.

It is found in the cellular thylakoid membrane. Its function is as follows. Produces ATP from ADP in the presence of a proton gradient across the membrane. This is ATP synthase epsilon chain from Cyanothece sp. (strain PCC 7425 / ATCC 29141).